The chain runs to 260 residues: Thiazole synthase (260 aa).

Lys-96 serves as the catalytic Schiff-base intermediate with DXP. Residues Gly-157, 184–185 (AG), and 206–207 (NT) each bind 1-deoxy-D-xylulose 5-phosphate.

It belongs to the ThiG family. As to quaternary structure, homotetramer. Forms heterodimers with either ThiH or ThiS.

The protein localises to the cytoplasm. The catalysed reaction is [ThiS sulfur-carrier protein]-C-terminal-Gly-aminoethanethioate + 2-iminoacetate + 1-deoxy-D-xylulose 5-phosphate = [ThiS sulfur-carrier protein]-C-terminal Gly-Gly + 2-[(2R,5Z)-2-carboxy-4-methylthiazol-5(2H)-ylidene]ethyl phosphate + 2 H2O + H(+). It functions in the pathway cofactor biosynthesis; thiamine diphosphate biosynthesis. In terms of biological role, catalyzes the rearrangement of 1-deoxy-D-xylulose 5-phosphate (DXP) to produce the thiazole phosphate moiety of thiamine. Sulfur is provided by the thiocarboxylate moiety of the carrier protein ThiS. In vitro, sulfur can be provided by H(2)S. This is Thiazole synthase from Nitrobacter winogradskyi (strain ATCC 25391 / DSM 10237 / CIP 104748 / NCIMB 11846 / Nb-255).